Reading from the N-terminus, the 197-residue chain is Imidazoleglycerol-phosphate dehydratase (197 aa).

This sequence belongs to the imidazoleglycerol-phosphate dehydratase family.

It localises to the cytoplasm. The enzyme catalyses D-erythro-1-(imidazol-4-yl)glycerol 3-phosphate = 3-(imidazol-4-yl)-2-oxopropyl phosphate + H2O. Its pathway is amino-acid biosynthesis; L-histidine biosynthesis; L-histidine from 5-phospho-alpha-D-ribose 1-diphosphate: step 6/9. The protein is Imidazoleglycerol-phosphate dehydratase of Clostridium acetobutylicum (strain ATCC 824 / DSM 792 / JCM 1419 / IAM 19013 / LMG 5710 / NBRC 13948 / NRRL B-527 / VKM B-1787 / 2291 / W).